A 168-amino-acid polypeptide reads, in one-letter code: Secreted RxLR effector protein RXLR-C06 (168 aa).

An N-terminal signal peptide occupies residues 1 to 22; it reads MRIQLLWLSFAVLSTILSTCDA. Residues 25–52 form a disordered region; it reads DKLDPQRVQPNQNGSGHNQSIRSALKTS. Residues 32–50 show a composition bias toward polar residues; that stretch reads VQPNQNGSGHNQSIRSALK. Residues Asn-37 and Asn-42 are each glycosylated (N-linked (GlcNAc...) asparagine). The RxLR-dEER signature appears at 46-63; it reads RSALKTSHGKTIADDEER. The IQ domain occupies 78 to 107; the sequence is YKAIVAKLSKYFRDYHERREIRKQRILNKS. Asn-105 carries N-linked (GlcNAc...) asparagine glycosylation.

This sequence belongs to the RxLR effector family.

It localises to the secreted. It is found in the host Golgi apparatus. Secreted effector that suppresses pattern-triggered immunity (PTI) in plant host. This is Secreted RxLR effector protein RXLR-C06 from Plasmopara halstedii (Downy mildew of sunflower).